The sequence spans 102 residues: MANKKIRIRLKAYEHRTLDTAAGKIVENATRTGATVAGPVPLSTERSLYTIIRATHKYKDSREQFEMRTHKRLIDIINPTQKTVDALMKLDLPSGVNVEIKL.

The protein belongs to the universal ribosomal protein uS10 family. Part of the 30S ribosomal subunit.

Its function is as follows. Involved in the binding of tRNA to the ribosomes. The chain is Small ribosomal subunit protein uS10 from Streptococcus thermophilus (strain CNRZ 1066).